Reading from the N-terminus, the 727-residue chain is ATP-dependent zinc metalloprotease FtsH (727 aa).

The Cytoplasmic portion of the chain corresponds to 1–6 (MQKAFR). A helical transmembrane segment spans residues 7-27 (NVLVIAIIGVIIFGVFSYING). Over 28–110 (NGNTPKQLSY…KVKEEEKQSV (83 aa)) the chain is Extracellular. Residues 111–131 (FVSMLTTLIPVLIIAFLFIFF) form a helical membrane-spanning segment. At 132-727 (LSQAQGGGGG…PNDPNNPSNR (596 aa)) the chain is on the cytoplasmic side. 205 to 212 (GPPGTGKT) serves as a coordination point for ATP. Residue histidine 427 coordinates Zn(2+). Glutamate 428 is an active-site residue. 2 residues coordinate Zn(2+): histidine 431 and aspartate 503. Composition is skewed to basic and acidic residues over residues 645 to 684 (LEEG…DQLR) and 691 to 706 (NDQH…DTGH). Positions 645–727 (LEEGKEDMRE…PNDPNNPSNR (83 aa)) are disordered. The span at 710-727 (PNIDKPYNPNDPNNPSNR) shows a compositional bias: low complexity.

It in the central section; belongs to the AAA ATPase family. The protein in the C-terminal section; belongs to the peptidase M41 family. Homohexamer. It depends on Zn(2+) as a cofactor.

The protein resides in the cell membrane. Acts as a processive, ATP-dependent zinc metallopeptidase for both cytoplasmic and membrane proteins. Plays a role in the quality control of integral membrane proteins. The protein is ATP-dependent zinc metalloprotease FtsH of Staphylococcus haemolyticus (strain JCSC1435).